We begin with the raw amino-acid sequence, 60 residues long: UPF0434 protein Dtpsy_1553 (60 aa).

This sequence belongs to the UPF0434 family.

The chain is UPF0434 protein Dtpsy_1553 from Acidovorax ebreus (strain TPSY) (Diaphorobacter sp. (strain TPSY)).